The primary structure comprises 54 residues: Ovomucoid (54 aa).

Positions 4 to 54 (VDCSGYPTHACTLELKPLCGSDNQTYSNKCGFCNAVAQSNGTLTLSHFGKC) constitute a Kazal-like domain. Disulfide bonds link Cys-6-Cys-36, Cys-14-Cys-33, and Cys-22-Cys-54. Residue Asn-43 is glycosylated (N-linked (GlcNAc...) asparagine).

It localises to the secreted. This Leipoa ocellata (Malleefowl) protein is Ovomucoid.